The primary structure comprises 411 residues: Putative competence-damage inducible protein (411 aa).

This sequence belongs to the CinA family.

In Alkaliphilus metalliredigens (strain QYMF), this protein is Putative competence-damage inducible protein.